Reading from the N-terminus, the 43-residue chain is Phi-Lf prophage-derived putative minor coat protein (43 aa).

This chain is Phi-Lf prophage-derived putative minor coat protein (gVII-1), found in Xanthomonas campestris pv. campestris (strain ATCC 33913 / DSM 3586 / NCPPB 528 / LMG 568 / P 25).